The following is a 299-amino-acid chain: MNTPLIVICGATATGKSGLALTLAQRLDSIIISADSRQVYREFDIGTAKPTHAEQDLVPHYLIDICSPTQTFTVADYQDKVTKLLQSTPCLSPSLLVGGTGLYIKSIVRGLKIPRVAPQPQLRQELEALGQAQCYAMLNQVDSLGAHKIHPHDQVRTLRALEVFYVTGVPISQQQGEYPPTYPILQIGLDSTPDALEKRIEQRTQMMLTMGLVKEVETLMEKYGSDLPLLNTLGYAEIKEYLQGKMSLDQAKAAIILHTRQFAKRQRTWFRSYREIQWFDPTSVNFLDNVWMTIQQFLA.

10 to 17 (GATATGKS) contacts ATP. Substrate is bound at residue 12 to 17 (TATGKS). Positions 35 to 38 (DSRQ) are interaction with substrate tRNA.

This sequence belongs to the IPP transferase family. In terms of assembly, monomer. Requires Mg(2+) as cofactor.

It carries out the reaction adenosine(37) in tRNA + dimethylallyl diphosphate = N(6)-dimethylallyladenosine(37) in tRNA + diphosphate. Its function is as follows. Catalyzes the transfer of a dimethylallyl group onto the adenine at position 37 in tRNAs that read codons beginning with uridine, leading to the formation of N6-(dimethylallyl)adenosine (i(6)A). The chain is tRNA dimethylallyltransferase from Rippkaea orientalis (strain PCC 8801 / RF-1) (Cyanothece sp. (strain PCC 8801)).